Here is a 164-residue protein sequence, read N- to C-terminus: UPF0178 protein BRADO3147 (164 aa).

It belongs to the UPF0178 family.

This chain is UPF0178 protein BRADO3147, found in Bradyrhizobium sp. (strain ORS 278).